The chain runs to 85 residues: U4-theraphotoxin-Hhn1ab (85 aa).

A signal peptide spans 1–22; sequence MKVTLIAILTCAAVLVLHTTAA. Residues 23 to 48 constitute a propeptide that is removed on maturation; that stretch reads EELEAESQLMEVGMPDTELAAVDEER. 2 cysteine pairs are disulfide-bonded: Cys-56–Cys-77 and Cys-71–Cys-82.

It belongs to the neurotoxin 12 (Hwtx-2) family. 02 (Hwtx-2) subfamily. As to expression, expressed by the venom gland.

The protein localises to the secreted. In terms of biological role, postsynaptic neurotoxin. This chain is U4-theraphotoxin-Hhn1ab, found in Cyriopagopus hainanus (Chinese bird spider).